A 786-amino-acid chain; its full sequence is Endonuclease MutS2 (786 aa).

333–340 (GPNTGGKT) lines the ATP pocket. Residues 682-709 (EKIKPSKQSAAQRPVVKVSGGGMSGPST) form a disordered region. Residues 711–786 (LDLRGERYDQ…GSGATIVNFK (76 aa)) enclose the Smr domain.

Belongs to the DNA mismatch repair MutS family. MutS2 subfamily. Homodimer. Binds to stalled ribosomes, contacting rRNA.

Endonuclease that is involved in the suppression of homologous recombination and thus may have a key role in the control of bacterial genetic diversity. Its function is as follows. Acts as a ribosome collision sensor, splitting the ribosome into its 2 subunits. Detects stalled/collided 70S ribosomes which it binds and splits by an ATP-hydrolysis driven conformational change. Acts upstream of the ribosome quality control system (RQC), a ribosome-associated complex that mediates the extraction of incompletely synthesized nascent chains from stalled ribosomes and their subsequent degradation. Probably generates substrates for RQC. This Lacticaseibacillus casei (strain BL23) (Lactobacillus casei) protein is Endonuclease MutS2.